We begin with the raw amino-acid sequence, 542 residues long: Protein DETOXIFICATION 34 (542 aa).

The next 12 helical transmembrane spans lie at 97–117, 127–147, 176–196, 204–224, 240–260, 272–292, 316–336, 344–364, 390–410, 435–455, 462–482, and 491–511; these read APIAFNILCNYGVNSFTSIFV, AVAIALSVVSNFSFGFLLGMA, ILLGTSVCLLPLYIYATPLLI, IAEISGKFTTQIIPQMFALAI, IMAWIGFFALTLHIFILYLFI, AAFDVSAWGIAIAQVVYVVGW, FASAVMLCLEIWYFMTIIVLT, IAVGSLSICMNINGWEGMLFI, VIVTVIESLVIGVVCAIVILI, LLGITMILNSLQPVISGVAVG, VAYINLFCYYAFGLPLGFLLG, and GIWIGMICGTSLQTLILLYMI.

It belongs to the multi antimicrobial extrusion (MATE) (TC 2.A.66.1) family.

Its subcellular location is the membrane. This is Protein DETOXIFICATION 34 from Arabidopsis thaliana (Mouse-ear cress).